We begin with the raw amino-acid sequence, 110 residues long: UPF0235 protein Mpop_2087 (110 aa).

Belongs to the UPF0235 family.

This chain is UPF0235 protein Mpop_2087, found in Methylorubrum populi (strain ATCC BAA-705 / NCIMB 13946 / BJ001) (Methylobacterium populi).